Consider the following 511-residue polypeptide: V-type proton ATPase subunit B, brain isoform (511 aa).

Residue arginine 400 coordinates ATP.

It belongs to the ATPase alpha/beta chains family. As to quaternary structure, V-ATPase is a heteromultimeric enzyme made up of two complexes: the ATP-hydrolytic V1 complex and the proton translocation V0 complex. The V1 complex consists of three catalytic AB heterodimers that form a heterohexamer, three peripheral stalks each consisting of EG heterodimers, one central rotor including subunits D and F, and the regulatory subunits C and H. The proton translocation complex V0 consists of the proton transport subunit a, a ring of proteolipid subunits c9c'', rotary subunit d, subunits e and f, and the accessory subunits ATP6AP1/Ac45 and ATP6AP2/PRR. As to expression, expressed in brain (at protein level). Expressed in all tissues tested, but highest in brain and in adrenal medulla.

The protein localises to the apical cell membrane. It is found in the melanosome. It localises to the cytoplasm. The protein resides in the cytoplasmic vesicle. Its subcellular location is the clathrin-coated vesicle membrane. The protein localises to the secretory vesicle. It is found in the synaptic vesicle membrane. In terms of biological role, non-catalytic subunit of the V1 complex of vacuolar(H+)-ATPase (V-ATPase), a multisubunit enzyme composed of a peripheral complex (V1) that hydrolyzes ATP and a membrane integral complex (V0) that translocates protons. V-ATPase is responsible for acidifying and maintaining the pH of intracellular compartments and in some cell types, is targeted to the plasma membrane, where it is responsible for acidifying the extracellular environment. In renal intercalated cells, can partially compensate the lack of ATP6V1B1 and mediate secretion of protons (H+) into the urine under base-line conditions but not in conditions of acid load. The protein is V-type proton ATPase subunit B, brain isoform (ATP6V1B2) of Bos taurus (Bovine).